A 463-amino-acid chain; its full sequence is SPARC-related modular calcium-binding protein 1 (463 aa).

The first 25 residues, 1–25 (MLPARVRLLTPHLLLVLVQLSPAGG), serve as a signal peptide directing secretion. The Kazal-like domain maps to 36 to 88 (SDRDPPCNPHCPRTQPKPICASDGRSYESMCEYQRAKCRDPALAVVHRGRCKD). Disulfide bonds link cysteine 42–cysteine 73, cysteine 46–cysteine 66, cysteine 55–cysteine 86, cysteine 94–cysteine 117, cysteine 128–cysteine 135, and cysteine 137–cysteine 157. A Thyroglobulin type-1 1 domain is found at 91–157 (QSKCRLERAQ…SSVQNKTPVC (67 aa)). The N-linked (GlcNAc...) asparagine glycan is linked to asparagine 224. The Thyroglobulin type-1 2 domain occupies 234–302 (VHSCDQERQS…TSTRYVMPSC (69 aa)). Cystine bridges form between cysteine 237-cysteine 261, cysteine 272-cysteine 279, and cysteine 281-cysteine 302. EF-hand domains follow at residues 369–404 (LEER…VKKK) and 406–441 (KPKK…SKEG). Residues aspartate 382, asparagine 384, serine 386, aspartate 388, glutamate 393, aspartate 419, asparagine 421, aspartate 423, and glutamate 430 each contribute to the Ca(2+) site. Residue asparagine 384 is glycosylated (N-linked (GlcNAc...) asparagine).

Post-translationally, glycosylated. As to expression, widely expressed in many tissues with a strongest signal in ovary.

It is found in the secreted. The protein localises to the extracellular space. It localises to the extracellular matrix. Its subcellular location is the basement membrane. Functionally, probable regulator of osteoblast differentiation. Plays essential roles in both eye and limb development. This is SPARC-related modular calcium-binding protein 1 (Smoc1) from Mus musculus (Mouse).